The following is an 87-amino-acid chain: Toxin Cll4 (87 aa).

Positions 1–19 (MNSLLMITACLALIGTVWA) are cleaved as a signal peptide. The region spanning 20-85 (KEGYIVNYHD…VWPLPKKRCN (66 aa)) is the LCN-type CS-alpha/beta domain. 4 disulfides stabilise this stretch: Cys-31–Cys-84, Cys-35–Cys-60, Cys-44–Cys-65, and Cys-48–Cys-67. Asn-85 is subject to Asparagine amide.

The protein belongs to the long (4 C-C) scorpion toxin superfamily. Sodium channel inhibitor family. Beta subfamily. In terms of tissue distribution, expressed by the venom gland.

The protein resides in the secreted. Functionally, beta toxins bind voltage-independently at site-4 of sodium channels (Nav) and shift the voltage of activation toward more negative potentials thereby affecting sodium channel activation and promoting spontaneous and repetitive firing. The chain is Toxin Cll4 from Centruroides limpidus (Mexican scorpion).